The sequence spans 435 residues: MERHDGEEYIPAIFGGQPPHASQVISLMKFSQETTTWNLPIMIAQALLVSEVIRTYPAELRMLHRLFQRKHPNMAEIFFILIKYLTIFAVIFDILVTETFAARTDFDCRSWAWTSSTFYFMCSTLVFCVIGWRARIIFRTSQVASWSLSVGLMGQFAVAMWTNYRVDKADALTPAGTCAPAAQVHADASQRNAALQLHFWQSSTFWFLLYNTIFESSILMACCIKLRKTSSGPSGLTKIAKVLFSNNVHYMAGVETCNVIELVMLLGWTSSLPPVHITSIAIQIVVGLQMLIGEQEAVYSPTCSQLSYSQYSSDSGGYINKHHAATSSSNGTFSTPSRTLSYVKRPGTGTTVADIGCADASGGGQHGRKGTFSSISSVPAYVKANPIVETVSPQMPSKAQSQSIPYKREVEVTVDMSPVPPPPGPSPAPLPAPYM.

Helical transmembrane passes span 33–53 (ETTT…SEVI), 77–97 (IFFI…ILVT), 111–131 (WAWT…CVIG), 143–163 (VASW…MWTN), and 204–224 (TFWF…ACCI). Asn330 is a glycosylation site (N-linked (GlcNAc...) asparagine). Residues 392 to 404 (SPQMPSKAQSQSI) are compositionally biased toward polar residues. Residues 392–435 (SPQMPSKAQSQSIPYKREVEVTVDMSPVPPPPGPSPAPLPAPYM) are disordered. A compositionally biased stretch (pro residues) spans 418-435 (PVPPPPGPSPAPLPAPYM).

Post-translationally, O-mannosylated by PMT4. Is also N-glycosylated.

Its subcellular location is the cell membrane. Plasma membrane virulence factor required for spreading and inducing tumors in infected leaves. This chain is Virulence factor PIT1, found in Mycosarcoma maydis (Corn smut fungus).